The primary structure comprises 483 residues: Uroporphyrinogen-III C-methyltransferase (483 aa).

Belongs to the precorrin methyltransferase family.

The catalysed reaction is uroporphyrinogen III + 2 S-adenosyl-L-methionine = precorrin-2 + 2 S-adenosyl-L-homocysteine + H(+). This Bacillus subtilis (strain 168) protein is Uroporphyrinogen-III C-methyltransferase (nasF).